The sequence spans 186 residues: Acireductone dioxygenase (186 aa).

Residues 1 to 21 (MSRLSIFPDGSTSMDQSSPTP) are disordered. Positions 10 to 20 (GSTSMDQSSPT) are enriched in polar residues. 4 residues coordinate Fe(2+): His103, His105, Glu109, and His147. Ni(2+) is bound by residues His103, His105, Glu109, and His147.

Belongs to the acireductone dioxygenase (ARD) family. Monomer. Requires Fe(2+) as cofactor. It depends on Ni(2+) as a cofactor.

It carries out the reaction 1,2-dihydroxy-5-(methylsulfanyl)pent-1-en-3-one + O2 = 3-(methylsulfanyl)propanoate + CO + formate + 2 H(+). The catalysed reaction is 1,2-dihydroxy-5-(methylsulfanyl)pent-1-en-3-one + O2 = 4-methylsulfanyl-2-oxobutanoate + formate + 2 H(+). It participates in amino-acid biosynthesis; L-methionine biosynthesis via salvage pathway; L-methionine from S-methyl-5-thio-alpha-D-ribose 1-phosphate: step 5/6. In terms of biological role, catalyzes 2 different reactions between oxygen and the acireductone 1,2-dihydroxy-3-keto-5-methylthiopentene (DHK-MTPene) depending upon the metal bound in the active site. Fe-containing acireductone dioxygenase (Fe-ARD) produces formate and 2-keto-4-methylthiobutyrate (KMTB), the alpha-ketoacid precursor of methionine in the methionine recycle pathway. Ni-containing acireductone dioxygenase (Ni-ARD) produces methylthiopropionate, carbon monoxide and formate, and does not lie on the methionine recycle pathway. This is Acireductone dioxygenase from Synechococcus sp. (strain CC9902).